Consider the following 474-residue polypeptide: Uronate isomerase (474 aa).

The protein belongs to the metallo-dependent hydrolases superfamily. Uronate isomerase family.

It catalyses the reaction D-glucuronate = D-fructuronate. The enzyme catalyses aldehydo-D-galacturonate = keto-D-tagaturonate. The protein operates within carbohydrate metabolism; pentose and glucuronate interconversion. The chain is Uronate isomerase from Photorhabdus laumondii subsp. laumondii (strain DSM 15139 / CIP 105565 / TT01) (Photorhabdus luminescens subsp. laumondii).